Consider the following 500-residue polypeptide: Na(+)/H(+) antiporter NhaB (500 aa).

12 consecutive transmembrane segments (helical) span residues Pro34–Phe54, Cys62–Thr82, Leu90–Met110, Ala129–Leu149, Thr150–Ala170, Leu205–Pro225, Phe241–Val261, Ile311–Ile331, Phe350–Ile370, Met394–Ile414, Val449–Leu469, and Met477–Ser497.

This sequence belongs to the NhaB Na(+)/H(+) (TC 2.A.34) antiporter family.

Its subcellular location is the cell inner membrane. It catalyses the reaction 2 Na(+)(in) + 3 H(+)(out) = 2 Na(+)(out) + 3 H(+)(in). Its function is as follows. Na(+)/H(+) antiporter that extrudes sodium in exchange for external protons. The protein is Na(+)/H(+) antiporter NhaB of Pseudomonas fluorescens (strain ATCC BAA-477 / NRRL B-23932 / Pf-5).